The sequence spans 466 residues: Ribulose bisphosphate carboxylase large chain (466 aa).

Lys-5 bears the N6,N6,N6-trimethyllysine mark. Residues Asn-114 and Thr-164 each contribute to the substrate site. Residue Lys-166 is the Proton acceptor of the active site. Residue Lys-168 participates in substrate binding. Lys-192, Asp-194, and Glu-195 together coordinate Mg(2+). Lys-192 carries the N6-carboxylysine modification. The active-site Proton acceptor is the His-285. Arg-286, His-318, and Ser-370 together coordinate substrate.

Belongs to the RuBisCO large chain family. Type I subfamily. In terms of assembly, heterohexadecamer of 8 large chains and 8 small chains; disulfide-linked. The disulfide link is formed within the large subunit homodimers. Mg(2+) is required as a cofactor. Post-translationally, the disulfide bond which can form in the large chain dimeric partners within the hexadecamer appears to be associated with oxidative stress and protein turnover.

Its subcellular location is the plastid. The protein localises to the chloroplast. The enzyme catalyses 2 (2R)-3-phosphoglycerate + 2 H(+) = D-ribulose 1,5-bisphosphate + CO2 + H2O. It catalyses the reaction D-ribulose 1,5-bisphosphate + O2 = 2-phosphoglycolate + (2R)-3-phosphoglycerate + 2 H(+). RuBisCO catalyzes two reactions: the carboxylation of D-ribulose 1,5-bisphosphate, the primary event in carbon dioxide fixation, as well as the oxidative fragmentation of the pentose substrate in the photorespiration process. Both reactions occur simultaneously and in competition at the same active site. The chain is Ribulose bisphosphate carboxylase large chain from Berzelia lanuginosa (Buttonbush).